A 343-amino-acid polypeptide reads, in one-letter code: MHELTYLQAGVIGLLQGITELFPVSSLGHSVLIPALIGGSWQHLVTENASGNSEGSPYLTFVVGLHVATAVALLVFFRSDWARVIRAFLTTLRTRRIETSAQRLAWLIVAATVPVGIIGLALEHTFRTLFAKPLAAALFLTANGMILLAGERLRRRSEQRAGTHQASARAEPATIPLTVPAPATVPTQTTSAPGGRATARHTTAPRGGLVVSEHRSLDTLAYREAGVIGLFQTLALLAGISRSGITMVAGLLRGLDHEDAARFSFLLATPVILAAGLLKLPALAGPAGDGIRGQVILGALIAGIAAYLSIRFLVRYFETRTLTPFAIYCLLTGALCTVRFAIA.

4 consecutive transmembrane segments (helical) span residues 21–41, 57–77, 104–124, and 129–149; these read LFPVSSLGHSVLIPALIGGSW, PYLTFVVGLHVATAVALLVFF, LAWLIVAATVPVGIIGLALEH, and LFAKPLAAALFLTANGMILLA. Over residues 179–193 the composition is skewed to low complexity; it reads VPAPATVPTQTTSAP. The disordered stretch occupies residues 179-202; it reads VPAPATVPTQTTSAPGGRATARHT. Helical transmembrane passes span 225-245, 265-285, 294-314, and 322-342; these read AGVIGLFQTLALLAGISRSGI, FLLATPVILAAGLLKLPALAG, QVILGALIAGIAAYLSIRFLV, and LTPFAIYCLLTGALCTVRFAI.

It belongs to the UppP family.

It localises to the cell membrane. The enzyme catalyses di-trans,octa-cis-undecaprenyl diphosphate + H2O = di-trans,octa-cis-undecaprenyl phosphate + phosphate + H(+). Catalyzes the dephosphorylation of undecaprenyl diphosphate (UPP). Confers resistance to bacitracin. This is Undecaprenyl-diphosphatase 2 from Frankia alni (strain DSM 45986 / CECT 9034 / ACN14a).